The following is a 158-amino-acid chain: 3-hydroxyacyl-[acyl-carrier-protein] dehydratase FabZ (158 aa).

Residue His-57 is part of the active site.

This sequence belongs to the thioester dehydratase family. FabZ subfamily.

It localises to the cytoplasm. It carries out the reaction a (3R)-hydroxyacyl-[ACP] = a (2E)-enoyl-[ACP] + H2O. Functionally, involved in unsaturated fatty acids biosynthesis. Catalyzes the dehydration of short chain beta-hydroxyacyl-ACPs and long chain saturated and unsaturated beta-hydroxyacyl-ACPs. This is 3-hydroxyacyl-[acyl-carrier-protein] dehydratase FabZ from Anaeromyxobacter sp. (strain Fw109-5).